We begin with the raw amino-acid sequence, 459 residues long: Vanillin aminotransferase (459 aa).

Pyridoxal 5'-phosphate-binding positions include 115-116 (GS) and D255. At K284 the chain carries N6-(pyridoxal phosphate)lysine. 320–321 (FT) is a pyridoxal 5'-phosphate binding site. Positions 430–457 (LEELDELIRIYGKALKDTEKRVEELKSQ) form a coiled coil.

This sequence belongs to the class-III pyridoxal-phosphate-dependent aminotransferase family. In terms of tissue distribution, confined to the placenta of green fruits at high levels. Barely detectable in the pericarp and seeds as well as in the placenta of mature fruits.

The enzyme catalyses vanillin + L-alanine = vanillylamine + pyruvate. Its pathway is aromatic compound metabolism; phenylpropanoid biosynthesis. Involved in the biosynthesis of capsaicinoids natural products, pungent alkaloids synthesized from phenylpropanoid intermediates in the placental tissue of chili pepper fruit acting as repellant on herbivorous mammals and conferring spiciness to hot peppers. Can transfer an amine from vanillylamine to pyruvate forming vanillin and L-alanine. The protein is Vanillin aminotransferase of Capsicum annuum (Capsicum pepper).